The sequence spans 570 residues: Guanine nucleotide-binding protein alpha-3 subunit (570 aa).

The region spanning 10 to 113 is the PH domain; that stretch reads RETLRAYLSK…WIEAIKHAIE (104 aa). The region spanning 144–570 is the G-alpha domain; that stretch reads PVLKLLLLGT…IISKTLEFYC (427 aa). Residues 147 to 160 form a G1 motif region; that stretch reads KLLLLGTGESGKST. 152–159 is a binding site for GTP; that stretch reads GTGESGKS. Ser159 contacts Mg(2+). 2 stretches are compositionally biased toward low complexity: residues 254–272 and 290–316; these read NNNS…SSSS and NSNS…RSNS. The disordered stretch occupies residues 254 to 321; sequence NNNSNSSSLK…NRSNSDGSSN (68 aa). Positions 386–394 are G2 motif; the sequence is DILKSRATT. GTP is bound by residues 388–394, 414–418, 483–486, and Ala544; these read LKSRATT, DVAGQ, and NKID. Thr394 lines the Mg(2+) pocket. Residues 410-419 form a G3 motif region; that stretch reads FRIVDVAGQR. A G4 motif region spans residues 479-486; it reads ILFLNKID. The tract at residues 542 to 547 is G5 motif; sequence TCATDT.

The protein belongs to the G-alpha family. As to quaternary structure, g proteins are composed of 3 units; alpha, beta and gamma. The alpha chain contains the guanine nucleotide binding site.

Its function is as follows. Guanine nucleotide-binding proteins (G proteins) are involved as modulators or transducers in various transmembrane signaling systems. G alpha-3 plays a role in development. G alpha-3 mutants fail to aggregate. In Dictyostelium discoideum (Social amoeba), this protein is Guanine nucleotide-binding protein alpha-3 subunit (gpaC).